We begin with the raw amino-acid sequence, 225 residues long: UPF0758 protein Sez_1052 (225 aa).

The 123-residue stretch at Pro102–Leu224 folds into the MPN domain. Zn(2+) is bound by residues His173, His175, and Asp186. Residues His173–Asp186 carry the JAMM motif motif.

This sequence belongs to the UPF0758 family.

This chain is UPF0758 protein Sez_1052, found in Streptococcus equi subsp. zooepidemicus (strain MGCS10565).